A 139-amino-acid chain; its full sequence is Arsenate reductase (139 aa).

Active-site nucleophile residues include Cys10, Cys82, and Cys89. 2 cysteine pairs are disulfide-bonded: Cys10–Cys82 and Cys82–Cys89.

Belongs to the low molecular weight phosphotyrosine protein phosphatase family. Thioredoxin-coupled ArsC subfamily.

The protein localises to the cytoplasm. The catalysed reaction is arsenate + [thioredoxin]-dithiol + H(+) = arsenite + [thioredoxin]-disulfide + H2O. In terms of biological role, catalyzes the reduction of arsenate [As(V)] to arsenite [As(III)]. The chain is Arsenate reductase from Halalkalibacterium halodurans (strain ATCC BAA-125 / DSM 18197 / FERM 7344 / JCM 9153 / C-125) (Bacillus halodurans).